Consider the following 156-residue polypeptide: Ribosome-binding factor A (156 aa).

The span at 125-138 (RVREGAKHAGDPDP) shows a compositional bias: basic and acidic residues. A disordered region spans residues 125-156 (RVREGAKHAGDPDPYRVGGAEDTDGDTDGDER). A compositionally biased stretch (acidic residues) spans 145–156 (EDTDGDTDGDER).

This sequence belongs to the RbfA family. As to quaternary structure, monomer. Binds 30S ribosomal subunits, but not 50S ribosomal subunits or 70S ribosomes.

The protein resides in the cytoplasm. Functionally, one of several proteins that assist in the late maturation steps of the functional core of the 30S ribosomal subunit. Associates with free 30S ribosomal subunits (but not with 30S subunits that are part of 70S ribosomes or polysomes). Required for efficient processing of 16S rRNA. May interact with the 5'-terminal helix region of 16S rRNA. In Mycolicibacterium smegmatis (strain ATCC 700084 / mc(2)155) (Mycobacterium smegmatis), this protein is Ribosome-binding factor A.